A 1088-amino-acid polypeptide reads, in one-letter code: RNA-directed RNA polymerase (1088 aa).

The RdRp catalytic domain occupies 501–687 (LSYGDVTRFL…AKRYIAGGKI (187 aa)).

The protein belongs to the reoviridae RNA-directed RNA polymerase family. In terms of assembly, interacts with VP3 (Potential). Interacts with VP2; this interaction activates VP1. Interacts with NSP5; this interaction is probably necessary for the formation of functional virus factories. Interacts with NSP2; this interaction is weak. It depends on Mg(2+) as a cofactor.

Its subcellular location is the virion. The catalysed reaction is RNA(n) + a ribonucleoside 5'-triphosphate = RNA(n+1) + diphosphate. In terms of biological role, RNA-directed RNA polymerase that is involved in both transcription and genome replication. Together with VP3 capping enzyme, forms an enzyme complex positioned near the channels situated at each of the five-fold vertices of the core. Following infection, the outermost layer of the virus is lost, leaving a double-layered particle (DLP) made up of the core and VP6 shell. VP1 then catalyzes the transcription of fully conservative plus-strand genomic RNAs that are extruded through the DLP's channels into the cytoplasm where they function as mRNAs for translation of viral proteins. One copy of each of the viral (+)RNAs is also recruited during core assembly, together with newly synthesized polymerase complexes and VP2. The polymerase of these novo-formed particles catalyzes the synthesis of complementary minus-strands leading to dsRNA formation. To do so, the polymerase specifically recognizes and binds 4 bases 5'-UGUG-3' in the conserved 3'-sequence of plus-strand RNA templates. VP2 presumably activates the autoinhibited VP1-RNA complex to coordinate packaging and genome replication. Once dsRNA synthesis is complete, the polymerase switches to the transcriptional mode, thus providing secondary transcription. In Sus scrofa (Pig), this protein is RNA-directed RNA polymerase.